Here is a 327-residue protein sequence, read N- to C-terminus: Phosphate acyltransferase (327 aa).

It belongs to the PlsX family. In terms of assembly, homodimer. Probably interacts with PlsY.

The protein resides in the cytoplasm. It catalyses the reaction a fatty acyl-[ACP] + phosphate = an acyl phosphate + holo-[ACP]. The protein operates within lipid metabolism; phospholipid metabolism. In terms of biological role, catalyzes the reversible formation of acyl-phosphate (acyl-PO(4)) from acyl-[acyl-carrier-protein] (acyl-ACP). This enzyme utilizes acyl-ACP as fatty acyl donor, but not acyl-CoA. The polypeptide is Phosphate acyltransferase (Mycoplasma mobile (strain ATCC 43663 / 163K / NCTC 11711) (Mesomycoplasma mobile)).